A 481-amino-acid polypeptide reads, in one-letter code: Lincomycin resistance protein (481 aa).

A run of 14 helical transmembrane segments spans residues 30–50 (WVTLVFLAVLQLLIAVDVTVV), 67–87 (QLTWVVTGYTVVGGGLLMVGG), 99–119 (LLFGAFLFGASSLAAGLAPNL), 127–147 (FGQGAGEALSLPAAMSLIACS), 162–182 (VASVGLVLGFLLSGVITQLFS), 185–205 (WIFLINIPLVSLVLVAVLLLV), 215–235 (PVDLPGALLFTAAPLLLIFGV), 245–265 (LPLAVGSLLAAAVCAAAFVAV), 285–305 (LVANGATVLLSAALSTSFFLL), 318–338 (IEAGLSFLPLGLSLILACVLV), 340–360 (GLIERIGTTGAAVLGMALAGP), 374–394 (LLTSVFPGMILLLRMATGLVA), 421–441 (LGGASGIAVYVSIGFSPHLGG), and 446–466 (FTVAYSLAGIGLIAAVLAVLA).

It belongs to the major facilitator superfamily. TCR/Tet family.

It localises to the cell membrane. Its function is as follows. Proton-dependent transporter. May mediate the efflux of lincomycin. The chain is Lincomycin resistance protein (lmrA) from Streptomyces lincolnensis.